The following is a 327-amino-acid chain: GTPase Obg (327 aa).

The Obg domain occupies 1 to 159 (MKFVDSARIV…LKVDLELKLM (159 aa)). The segment at 120–145 (GGDGGRGNPHFTTSTRQAPRYAEPGG) is disordered. An OBG-type G domain is found at 160-323 (ADVGLVGFPN…LRNALWNTIN (164 aa)). Residues 166–173 (GFPNAGKS), 191–195 (FTTLV), 213–216 (DIPG), 280–283 (TKMD), and 304–306 (SSI) contribute to the GTP site. Residues Ser-173 and Thr-193 each coordinate Mg(2+).

Belongs to the TRAFAC class OBG-HflX-like GTPase superfamily. OBG GTPase family. Monomer. The cofactor is Mg(2+).

It localises to the cytoplasm. An essential GTPase which binds GTP, GDP and possibly (p)ppGpp with moderate affinity, with high nucleotide exchange rates and a fairly low GTP hydrolysis rate. Plays a role in control of the cell cycle, stress response, ribosome biogenesis and in those bacteria that undergo differentiation, in morphogenesis control. This chain is GTPase Obg, found in Prosthecochloris aestuarii (strain DSM 271 / SK 413).